The sequence spans 127 residues: Protein ApaG (127 aa).

Residues 3–127 enclose the ApaG domain; the sequence is EGKKYEIAVK…FILSVPRILH (125 aa).

The polypeptide is Protein ApaG (Nitrosospira multiformis (strain ATCC 25196 / NCIMB 11849 / C 71)).